Here is a 50-residue protein sequence, read N- to C-terminus: uncharacterized protein (50 aa).

This is an uncharacterized protein from Ornithodoros (relapsing fever ticks).